Here is an 86-residue protein sequence, read N- to C-terminus: Large ribosomal subunit protein bL31B (86 aa).

This sequence belongs to the bacterial ribosomal protein bL31 family. Type B subfamily. Part of the 50S ribosomal subunit.

The polypeptide is Large ribosomal subunit protein bL31B (Cupriavidus metallidurans (strain ATCC 43123 / DSM 2839 / NBRC 102507 / CH34) (Ralstonia metallidurans)).